Reading from the N-terminus, the 512-residue chain is Lysine--tRNA ligase (512 aa).

Mg(2+) contacts are provided by glutamate 408 and glutamate 415.

This sequence belongs to the class-II aminoacyl-tRNA synthetase family. As to quaternary structure, homodimer. Mg(2+) serves as cofactor.

Its subcellular location is the cytoplasm. The enzyme catalyses tRNA(Lys) + L-lysine + ATP = L-lysyl-tRNA(Lys) + AMP + diphosphate. The chain is Lysine--tRNA ligase from Prochlorococcus marinus (strain MIT 9301).